A 223-amino-acid polypeptide reads, in one-letter code: dITP/XTP pyrophosphatase (223 aa).

Residue 9–14 participates in substrate binding; that stretch reads TTNQNK. Catalysis depends on aspartate 71, which acts as the Proton acceptor. Aspartate 71 lines the Mg(2+) pocket. Residues serine 72, 152–155, lysine 175, and 180–181 each bind substrate; these read FGYD and HR. Residues 203–223 form a disordered region; it reads LSEEKPAKPDHSEFEGNDWSK.

The protein belongs to the HAM1 NTPase family. Homodimer. Mg(2+) is required as a cofactor.

It carries out the reaction XTP + H2O = XMP + diphosphate + H(+). The catalysed reaction is dITP + H2O = dIMP + diphosphate + H(+). The enzyme catalyses ITP + H2O = IMP + diphosphate + H(+). Functionally, pyrophosphatase that catalyzes the hydrolysis of nucleoside triphosphates to their monophosphate derivatives, with a high preference for the non-canonical purine nucleotides XTP (xanthosine triphosphate), dITP (deoxyinosine triphosphate) and ITP. Seems to function as a house-cleaning enzyme that removes non-canonical purine nucleotides from the nucleotide pool, thus preventing their incorporation into DNA/RNA and avoiding chromosomal lesions. In Desulfotalea psychrophila (strain LSv54 / DSM 12343), this protein is dITP/XTP pyrophosphatase.